The primary structure comprises 448 residues: Phosphohexose mutases (448 aa).

The active-site Phosphoserine intermediate is Ser97. The Mg(2+) site is built by Ser97, Asp237, Asp239, and Asp241.

Belongs to the phosphohexose mutase family. Requires Mg(2+) as cofactor.

It catalyses the reaction alpha-D-glucose 1-phosphate = alpha-D-glucose 6-phosphate. The enzyme catalyses alpha-D-mannose 1-phosphate = D-mannose 6-phosphate. It participates in nucleotide-sugar biosynthesis; GDP-alpha-D-mannose biosynthesis; alpha-D-mannose 1-phosphate from D-fructose 6-phosphate: step 2/2. Functionally, involved in xanthan production. The chain is Phosphohexose mutases (xanA) from Xanthomonas campestris pv. campestris (strain B100).